The chain runs to 341 residues: Cyclic GMP-AMP synthase-like receptor (341 aa).

Residues serine 64 and 77 to 79 (EFD) contribute to the ATP site. 3 residues coordinate Mg(2+): glutamate 77, aspartate 79, and aspartate 172. Aspartate 172 provides a ligand contact to GTP. ATP contacts are provided by residues lysine 230 and 246 to 250 (SYHIK). Glutamate 258 is a binding site for Mn(2+).

It belongs to the mab-21 family. Requires Mg(2+) as cofactor. The cofactor is Mn(2+).

The catalysed reaction is GTP + ATP = 2',3'-cGAMP + 2 diphosphate. The enzyme catalyses GTP + ATP = pppGp(2'-5')A + diphosphate. It catalyses the reaction pppGp(2'-5')A = 2',3'-cGAMP + diphosphate. Functionally, nucleotidyltransferase that catalyzes the formation of cyclic GMP-AMP (2',3'-cGAMP) from ATP and GTP and plays a key role in innate immunity. Acts as a key sensor of double-stranded RNA (dsRNA), the presence of dsRNA in the cytoplasm being a danger signal that triggers the immune responses. Directly binds dsRNA, activating the nucleotidyltransferase activity, leading to synthesis of 2',3'-cGAMP, a second messenger that binds to and activates Sting, thereby triggering the immune response via activation of the NF-kappa-B transcription factor. The sequence is that of Cyclic GMP-AMP synthase-like receptor from Hydra vulgaris (Hydra).